Reading from the N-terminus, the 305-residue chain is MHPPAPALLIINGKGAGNEEVRLAVQKLRDENQTLHVRVTWEQGDAARYVQEACQLGVATLIAGGGDGTINEVAAALAALPAKGRPVLGILPLGTANDFAMACNIPLIPEQALRLAVKGRAVPIDLAKVNDQRYFINMATGGFGTRITTETPEKLKAALGGVSYFIHGLLRMDTLKADRCEIRGPDFHWSGDALVIGIGNGKQAGGGQQLCPDALINDGLLQLRLLTADELLPTLIASLFNDEENKNVIGAALPWLEIDAPHEMTFNLDGEPLKGRHFRIEVLPNAIECRLPPNCELLGQTQSSQ.

The 133-residue stretch at 2–134 folds into the DAGKc domain; it reads HPPAPALLII…DLAKVNDQRY (133 aa). ATP is bound by residues T40, 66–72, and T95; that span reads GDGTINE. Mg(2+)-binding residues include L215, D218, and L220. E271 functions as the Proton acceptor in the catalytic mechanism.

It belongs to the diacylglycerol/lipid kinase family. YegS lipid kinase subfamily. It depends on Mg(2+) as a cofactor. Requires Ca(2+) as cofactor.

The protein localises to the cytoplasm. Its function is as follows. Probably phosphorylates lipids; the in vivo substrate is unknown. The polypeptide is Probable lipid kinase YegS-like (Serratia proteamaculans (strain 568)).